The sequence spans 894 residues: Alanine--tRNA ligase (894 aa).

Histidine 569, histidine 573, cysteine 683, and histidine 687 together coordinate Zn(2+).

Belongs to the class-II aminoacyl-tRNA synthetase family. Zn(2+) serves as cofactor.

The protein resides in the cytoplasm. The catalysed reaction is tRNA(Ala) + L-alanine + ATP = L-alanyl-tRNA(Ala) + AMP + diphosphate. In terms of biological role, catalyzes the attachment of alanine to tRNA(Ala) in a two-step reaction: alanine is first activated by ATP to form Ala-AMP and then transferred to the acceptor end of tRNA(Ala). Also edits incorrectly charged Ser-tRNA(Ala) and Gly-tRNA(Ala) via its editing domain. The protein is Alanine--tRNA ligase of Chloroflexus aurantiacus (strain ATCC 29366 / DSM 635 / J-10-fl).